Consider the following 299-residue polypeptide: ATP phosphoribosyltransferase (299 aa).

Belongs to the ATP phosphoribosyltransferase family. Long subfamily. In terms of assembly, equilibrium between an active dimeric form, an inactive hexameric form and higher aggregates. Interconversion between the various forms is largely reversible and is influenced by the natural substrates and inhibitors of the enzyme. It depends on Mg(2+) as a cofactor.

It localises to the cytoplasm. The catalysed reaction is 1-(5-phospho-beta-D-ribosyl)-ATP + diphosphate = 5-phospho-alpha-D-ribose 1-diphosphate + ATP. It functions in the pathway amino-acid biosynthesis; L-histidine biosynthesis; L-histidine from 5-phospho-alpha-D-ribose 1-diphosphate: step 1/9. Its activity is regulated as follows. Feedback inhibited by histidine. Functionally, catalyzes the condensation of ATP and 5-phosphoribose 1-diphosphate to form N'-(5'-phosphoribosyl)-ATP (PR-ATP). Has a crucial role in the pathway because the rate of histidine biosynthesis seems to be controlled primarily by regulation of HisG enzymatic activity. This Buchnera aphidicola subsp. Schizaphis graminum (strain Sg) protein is ATP phosphoribosyltransferase (hisG).